We begin with the raw amino-acid sequence, 421 residues long: Synaptotagmin-1 (421 aa).

Positions 1–40 (MVSESHHEALAAPPATTVAAAPPSNVTEPASPGGGGGKED) are disordered. Residues 1-60 (MVSESHHEALAAPPATTVAAAPPSNVTEPASPGGGGGKEDAFSKLKEKFMNELNKIPLPP) lie on the Vesicular side of the membrane. The span at 10-23 (LAAPPATTVAAAPP) shows a compositional bias: low complexity. The N-linked (GlcNAc...) asparagine glycan is linked to Asn25. Residues 61 to 81 (WALIAIAIVAVLLILTCCFCL) traverse the membrane as a helical segment. S-palmitoyl cysteine attachment occurs at residues Cys77, Cys78, Cys80, Cys82, and Cys85. Residues 82–421 (CKKCLFKKKN…EVDAMLAVKK (340 aa)) lie on the Cytoplasmic side of the membrane. The segment at 94–139 (KGKEKGGKNAINMKDVKDLGKTMKDQDDDAETGLTDGEEKEEPKEV) is disordered. Positions 107-118 (KDVKDLGKTMKD) are enriched in basic and acidic residues. The span at 119 to 133 (QDDDAETGLTDGEEK) shows a compositional bias: acidic residues. The phospholipid binding stretch occupies residues 135 to 381 (EPKEVEKLGK…AIGKVFVGYN (247 aa)). 2 consecutive C2 domains span residues 141–260 (KLGK…EEWR) and 272–405 (KLGD…AQWH). The Ca(2+) site is built by Leu171, Asp172, Asp178, Asp230, Phe231, Asp232, Ser235, Lys236, Asp238, Asp303, Asp309, Asp363, Asp365, and Asp371.

It belongs to the synaptotagmin family. As to quaternary structure, homotetramer. Ca(2+) serves as cofactor.

Its subcellular location is the cytoplasmic vesicle. The protein localises to the secretory vesicle membrane. It is found in the secretory vesicle. It localises to the synaptic vesicle membrane. The protein resides in the chromaffin granule membrane. Its subcellular location is the cytoplasm. Its function is as follows. Calcium sensor that participates in triggering neurotransmitter release at the synapse. May have a regulatory role in the membrane interactions during trafficking of synaptic vesicles at the active zone of the synapse. It binds acidic phospholipids with a specificity that requires the presence of both an acidic head group and a diacyl backbone. May play a role in dendrite formation by melanocytes. May play a role in regulating the secretion of hormones relevant to the reproduction and egg-laying of female geese. The polypeptide is Synaptotagmin-1 (Anser cygnoides (Swan goose)).